The primary structure comprises 292 residues: Alpha-soluble NSF attachment protein (292 aa).

This sequence belongs to the SNAP family.

It localises to the cytoplasmic vesicle. The protein localises to the membrane. Required for vesicular transport between the endoplasmic reticulum and the Golgi apparatus. Also between the endosome and phagosome. The chain is Alpha-soluble NSF attachment protein from Drosophila melanogaster (Fruit fly).